A 356-amino-acid polypeptide reads, in one-letter code: MAKIVVIGAGVAGLTTALQLLRKGHEVTIVSEFTPGDLSIGYTSPWAGANWLTFYDGGKLADYDAVSYPILRELARSSPEAGIRLISQRSHVLKRDLPKLEVAMSAICQRNPWFKNTVDSFEIIEDRSRIVHDDVAYLVEFRSVCIHTGVYLNWLMSQCLSLGATVVKRRVNHIKDANLLHSSGSRPDVIVNCSGLFARFLGGVEDKKMYPIRGQVVLVRNSLPFMASFSSTPEKENEDEALYIMTRFDGTSIIGGCFQPNNWSSEPDPSLTHRILSRALDRFPELTKDGPLDIVRECVGHRPGREGGPRVELEKIPGVGFVVHNYGAAGAGYQSSYGMADEAVSYVERALTRPNL.

The first 17 residues, 1–17 (MAKIVVIGAGVAGLTTA), serve as a signal peptide directing secretion. 4 residues coordinate FAD: Ala-9, Ser-44, Gly-48, and Asn-50. Anthranilate is bound at residue Phe-54. An FAD-binding site is contributed by Val-171. Residue Asn-192 is glycosylated (N-linked (GlcNAc...) asparagine). Tyr-243 lines the anthranilate pocket. Tyr-243 lines the (R)-lactate pocket. Residue Asn-262 is glycosylated (N-linked (GlcNAc...) asparagine). 5 residues coordinate FAD: Arg-302, Ala-329, Gly-332, Tyr-333, and Gln-334. Arg-302 is a binding site for anthranilate. Arg-302 contacts (R)-lactate.

It belongs to the DAMOX/DASOX family. Requires FAD as cofactor.

It localises to the peroxisome matrix. It carries out the reaction a D-alpha-amino acid + O2 + H2O = a 2-oxocarboxylate + H2O2 + NH4(+). It catalyses the reaction D-alanine + O2 + H2O = pyruvate + H2O2 + NH4(+). The catalysed reaction is D-serine + O2 + H2O = 3-hydroxypyruvate + H2O2 + NH4(+). The enzyme catalyses D-phenylalanine + O2 + H2O = 3-phenylpyruvate + H2O2 + NH4(+). It carries out the reaction D-lysine + O2 + H2O = 6-amino-2-oxohexanoate + H2O2 + NH4(+). It catalyses the reaction D-tyrosine + O2 + H2O = 3-(4-hydroxyphenyl)pyruvate + H2O2 + NH4(+). The catalysed reaction is D-methionine + O2 + H2O = 4-methylsulfanyl-2-oxobutanoate + H2O2 + NH4(+). The enzyme catalyses D-tryptophan + O2 + H2O = indole-3-pyruvate + H2O2 + NH4(+). It carries out the reaction D-leucine + O2 + H2O = 4-methyl-2-oxopentanoate + H2O2 + NH4(+). It catalyses the reaction D-valine + O2 + H2O = 3-methyl-2-oxobutanoate + H2O2 + NH4(+). Inhibited by benzoate and hypochlorite. Functionally, catalyzes the oxidative deamination of D-amino acids with broad substrate specificity. Enables the organism to utilize D-amino acids as a source of nutrients. The sequence is that of D-amino-acid oxidase from Trigonopsis variabilis (Yeast).